A 397-amino-acid polypeptide reads, in one-letter code: Homeobox protein knotted-1-like 2 (397 aa).

3 disordered regions span residues 43-68, 172-191, and 233-276; these read TFHLQSSGGGGGGGSGDQCNFQSPGT, FEARQRSSGTSRETSKDPEL, and NNNA…PRAE. Gly residues predominate over residues 49-58; that stretch reads SGGGGGGGSG. Residues 279–299 enclose the ELK domain; it reads ELKNHLLRKYSGYLSSLKQEL. Positions 300-363 form a DNA-binding region, homeobox; TALE-type; sequence SKKKKKGKLP…NQRKRHWKPS (64 aa).

The protein belongs to the TALE/KNOX homeobox family. As to expression, expressed only in the stems.

It localises to the nucleus. Probably binds to the DNA sequence 5'-TGAC-3'. The polypeptide is Homeobox protein knotted-1-like 2 (Malus domestica (Apple)).